The sequence spans 396 residues: Gap junction gamma-1 protein (396 aa).

The Cytoplasmic portion of the chain corresponds to methionine 1–lysine 22. The helical transmembrane segment at isoleucine 23–tyrosine 45 threads the bilayer. Residues aspartate 46 to arginine 75 lie on the Extracellular side of the membrane. The helical transmembrane segment at phenylalanine 76–alanine 95 threads the bilayer. Over isoleucine 96–lysine 175 the chain is Cytoplasmic. The tract at residues leucine 146–arginine 165 is disordered. Residues glutamate 147 to asparagine 156 are compositionally biased toward basic and acidic residues. Residues isoleucine 176 to leucine 198 form a helical membrane-spanning segment. The Extracellular portion of the chain corresponds to tyrosine 199–lysine 228. The chain crosses the membrane as a helical span at residues threonine 229–tryptophan 248. Topologically, residues glutamate 249 to isoleucine 396 are cytoplasmic. The tract at residues tyrosine 356–isoleucine 396 is disordered. A compositionally biased stretch (low complexity) spans glycine 373–isoleucine 396.

This sequence belongs to the connexin family. Gamma-type subfamily. A connexon is composed of a hexamer of connexins. Interacts with CNST.

Its subcellular location is the cell membrane. The protein resides in the cell junction. It localises to the gap junction. One gap junction consists of a cluster of closely packed pairs of transmembrane channels, the connexons, through which materials of low MW diffuse from one cell to a neighboring cell. This chain is Gap junction gamma-1 protein (GJC1), found in Bos taurus (Bovine).